We begin with the raw amino-acid sequence, 63 residues long: Large ribosomal subunit protein uL30 (63 aa).

Belongs to the universal ribosomal protein uL30 family. Part of the 50S ribosomal subunit.

The polypeptide is Large ribosomal subunit protein uL30 (Rickettsia peacockii (strain Rustic)).